The following is a 218-amino-acid chain: Octanoyltransferase (218 aa).

One can recognise a BPL/LPL catalytic domain in the interval 31–207; the sequence is AQTPDELWLL…QLAAQLGYAE (177 aa). Substrate contacts are provided by residues 70–77, 137–139, and 150–152; these read RGGQVTYH, SLG, and GLA. Cysteine 168 (acyl-thioester intermediate) is an active-site residue.

It belongs to the LipB family.

Its subcellular location is the cytoplasm. It carries out the reaction octanoyl-[ACP] + L-lysyl-[protein] = N(6)-octanoyl-L-lysyl-[protein] + holo-[ACP] + H(+). It functions in the pathway protein modification; protein lipoylation via endogenous pathway; protein N(6)-(lipoyl)lysine from octanoyl-[acyl-carrier-protein]: step 1/2. Functionally, catalyzes the transfer of endogenously produced octanoic acid from octanoyl-acyl-carrier-protein onto the lipoyl domains of lipoate-dependent enzymes. Lipoyl-ACP can also act as a substrate although octanoyl-ACP is likely to be the physiological substrate. The protein is Octanoyltransferase of Azotobacter vinelandii (strain DJ / ATCC BAA-1303).